Consider the following 1217-residue polypeptide: ATP-dependent helicase/nuclease subunit A (1217 aa).

Positions 10–475 (VIWTDAQWQS…IDLSQNFRSR (466 aa)) constitute a UvrD-like helicase ATP-binding domain. An ATP-binding site is contributed by 31-38 (AAAGSGKT). The UvrD-like helicase C-terminal domain maps to 476–786 (KEVLSTTNYI…RMMTIHSSKG (311 aa)).

Belongs to the helicase family. AddA subfamily. In terms of assembly, heterodimer of AddA and AddB/RexB. The cofactor is Mg(2+).

The catalysed reaction is Couples ATP hydrolysis with the unwinding of duplex DNA by translocating in the 3'-5' direction.. The enzyme catalyses ATP + H2O = ADP + phosphate + H(+). Its function is as follows. The heterodimer acts as both an ATP-dependent DNA helicase and an ATP-dependent, dual-direction single-stranded exonuclease. Recognizes the chi site generating a DNA molecule suitable for the initiation of homologous recombination. The AddA nuclease domain is required for chi fragment generation; this subunit has the helicase and 3' -&gt; 5' nuclease activities. The polypeptide is ATP-dependent helicase/nuclease subunit A (Staphylococcus aureus (strain MRSA252)).